We begin with the raw amino-acid sequence, 357 residues long: Arginine kinase (357 aa).

An N-acetylalanine modification is found at A2. The Phosphagen kinase N-terminal domain occupies K9–K91. G64–Y68 lines the L-arginine pocket. Residues F119–M356 enclose the Phosphagen kinase C-terminal domain. Residues S122 to R126 and H185 each bind ATP. Position 225 (E225) interacts with L-arginine. Residue R229 coordinates ATP. C271 lines the L-arginine pocket. ATP is bound by residues R280 to H284 and R309 to E314. Position 314 (E314) interacts with L-arginine.

It belongs to the ATP:guanido phosphotransferase family.

It catalyses the reaction L-arginine + ATP = N(omega)-phospho-L-arginine + ADP + H(+). In Callinectes sapidus (Blue crab), this protein is Arginine kinase.